Here is a 364-residue protein sequence, read N- to C-terminus: Alanine racemase (364 aa).

K34 functions as the Proton acceptor; specific for D-alanine in the catalytic mechanism. An N6-(pyridoxal phosphate)lysine modification is found at K34. Residue R129 coordinates substrate. Y259 serves as the catalytic Proton acceptor; specific for L-alanine. M307 contacts substrate.

The protein belongs to the alanine racemase family. Pyridoxal 5'-phosphate is required as a cofactor.

It carries out the reaction L-alanine = D-alanine. It functions in the pathway amino-acid biosynthesis; D-alanine biosynthesis; D-alanine from L-alanine: step 1/1. Its function is as follows. Catalyzes the interconversion of L-alanine and D-alanine. May also act on other amino acids. In Coxiella burnetii (strain CbuG_Q212) (Coxiella burnetii (strain Q212)), this protein is Alanine racemase (alr).